The chain runs to 466 residues: Uronate isomerase (466 aa).

It belongs to the metallo-dependent hydrolases superfamily. Uronate isomerase family.

The enzyme catalyses D-glucuronate = D-fructuronate. It catalyses the reaction aldehydo-D-galacturonate = keto-D-tagaturonate. The protein operates within carbohydrate metabolism; pentose and glucuronate interconversion. This Lachnoclostridium phytofermentans (strain ATCC 700394 / DSM 18823 / ISDg) (Clostridium phytofermentans) protein is Uronate isomerase.